Here is a 147-residue protein sequence, read N- to C-terminus: D-aminoacyl-tRNA deacylase (147 aa).

Residues 136–137 (GP) carry the Gly-cisPro motif, important for rejection of L-amino acids motif.

The protein belongs to the DTD family. As to quaternary structure, homodimer.

It localises to the cytoplasm. It catalyses the reaction glycyl-tRNA(Ala) + H2O = tRNA(Ala) + glycine + H(+). It carries out the reaction a D-aminoacyl-tRNA + H2O = a tRNA + a D-alpha-amino acid + H(+). Functionally, an aminoacyl-tRNA editing enzyme that deacylates mischarged D-aminoacyl-tRNAs. Also deacylates mischarged glycyl-tRNA(Ala), protecting cells against glycine mischarging by AlaRS. Acts via tRNA-based rather than protein-based catalysis; rejects L-amino acids rather than detecting D-amino acids in the active site. By recycling D-aminoacyl-tRNA to D-amino acids and free tRNA molecules, this enzyme counteracts the toxicity associated with the formation of D-aminoacyl-tRNA entities in vivo and helps enforce protein L-homochirality. The polypeptide is D-aminoacyl-tRNA deacylase (Streptococcus sanguinis (strain SK36)).